The primary structure comprises 83 residues: Bublin coiled-coil protein (83 aa).

The disordered stretch occupies residues 1 to 24 (MSGPNGDLGMPVEAGAEGEEDGFG). A coiled-coil region spans residues 25-74 (EAEYAAINSMLDQINSCLDHLEEKNDHLHARLQELLESNRQTRLEFQQQL). Serine 82 carries the phosphoserine modification.

This sequence belongs to the UPF0184 (EST00098) family.

Its subcellular location is the cell junction. The protein resides in the cytoplasm. The protein localises to the cytoskeleton. Its function is as follows. Essential for intermediate filament organization in intestinal cells, interacts with intermediate filament and regulates intestinal lumen morphology. The polypeptide is Bublin coiled-coil protein (Homo sapiens (Human)).